Consider the following 137-residue polypeptide: Protein PsiE homolog (137 aa).

The next 4 helical transmembrane spans lie at 13-35 (ILLR…AFLI), 55-77 (YYMT…IVKY), 84-103 (FPLR…FIIV), and 107-129 (SATS…FLAN).

Belongs to the PsiE family.

The protein localises to the cell membrane. The chain is Protein PsiE homolog from Listeria monocytogenes serotype 4b (strain F2365).